The primary structure comprises 784 residues: Protein Skeletor, isoforms B/C (784 aa).

An N-terminal signal peptide occupies residues 1–28 (MLAMKDKPWLLLFGLLAALSCLASFGDA). DM13 domains are found at residues 34-143 (GTKI…VSIP) and 151-258 (PQKI…VRLP). Positions 287–419 (LAFEVRWAVA…GAESVVWAIG (133 aa)) constitute a DOMON domain. The interval 451-491 (PLPEGARGNSNSSEQEDSAPAAQSSTGGAGYPPAGRPNVEP) is disordered.

As to quaternary structure, interacts with Chro and Mgtor as part of a macromolecular complex forming the spindle matrix. Chro colocalizes with Skeletor (Skel) on the chromosomes at interphase and on spindle during metaphase.

The protein localises to the cytoplasm. It localises to the cytoskeleton. It is found in the spindle. The protein resides in the nucleus. Its subcellular location is the nucleolus. The protein localises to the chromosome. Functionally, provides structural support to stabilize and organize the microtubule spindle during mitosis (within embryonic somatic cells) and meiosis (within spermatocytes). The role in mitosis regulation depends on the Ran pathway. In Drosophila melanogaster (Fruit fly), this protein is Protein Skeletor, isoforms B/C.